Here is a 128-residue protein sequence, read N- to C-terminus: Ferric uptake regulation protein homolog (128 aa).

This sequence belongs to the Fur family.

The polypeptide is Ferric uptake regulation protein homolog (Archaeoglobus fulgidus (strain ATCC 49558 / DSM 4304 / JCM 9628 / NBRC 100126 / VC-16)).